Reading from the N-terminus, the 337-residue chain is Eukaryotic translation initiation factor 3 subunit H (337 aa).

One can recognise an MPN domain in the interval 21–153 (VQCDGLAVMK…LKAYRLTPQA (133 aa)).

Belongs to the eIF-3 subunit H family. As to quaternary structure, component of the eukaryotic translation initiation factor 3 (eIF-3) complex. The eIF-3 complex interacts with pix. Interacts with mxt.

The protein resides in the cytoplasm. Functionally, component of the eukaryotic translation initiation factor 3 (eIF-3) complex, which is involved in protein synthesis of a specialized repertoire of mRNAs and, together with other initiation factors, stimulates binding of mRNA and methionyl-tRNAi to the 40S ribosome. The eIF-3 complex specifically targets and initiates translation of a subset of mRNAs involved in cell proliferation. The chain is Eukaryotic translation initiation factor 3 subunit H from Drosophila virilis (Fruit fly).